The chain runs to 251 residues: Hydroxyacylglutathione hydrolase (251 aa).

Zn(2+) is bound by residues H53, H55, D57, H58, H110, D127, and H165.

This sequence belongs to the metallo-beta-lactamase superfamily. Glyoxalase II family. Monomer. It depends on Zn(2+) as a cofactor.

The catalysed reaction is an S-(2-hydroxyacyl)glutathione + H2O = a 2-hydroxy carboxylate + glutathione + H(+). The protein operates within secondary metabolite metabolism; methylglyoxal degradation; (R)-lactate from methylglyoxal: step 2/2. Functionally, thiolesterase that catalyzes the hydrolysis of S-D-lactoyl-glutathione to form glutathione and D-lactic acid. In Salmonella dublin (strain CT_02021853), this protein is Hydroxyacylglutathione hydrolase.